The chain runs to 431 residues: tRNA(Ile)-lysidine synthase (431 aa).

Position 19-24 (Ser19–Ser24) interacts with ATP.

It belongs to the tRNA(Ile)-lysidine synthase family.

The protein localises to the cytoplasm. It carries out the reaction cytidine(34) in tRNA(Ile2) + L-lysine + ATP = lysidine(34) in tRNA(Ile2) + AMP + diphosphate + H(+). Ligates lysine onto the cytidine present at position 34 of the AUA codon-specific tRNA(Ile) that contains the anticodon CAU, in an ATP-dependent manner. Cytidine is converted to lysidine, thus changing the amino acid specificity of the tRNA from methionine to isoleucine. In Staphylococcus aureus (strain MW2), this protein is tRNA(Ile)-lysidine synthase.